Reading from the N-terminus, the 388-residue chain is Succinate--CoA ligase [ADP-forming] subunit beta (388 aa).

The ATP-grasp domain maps to 9-244 (KQIFAKYKLP…PSQDDPREAL (236 aa)). ATP contacts are provided by residues lysine 46, 53 to 55 (GRG), glutamate 99, alanine 102, and glutamate 107. Mg(2+) contacts are provided by asparagine 199 and aspartate 213. Substrate-binding positions include asparagine 264 and 321–323 (GIV).

It belongs to the succinate/malate CoA ligase beta subunit family. Heterotetramer of two alpha and two beta subunits. Requires Mg(2+) as cofactor.

It carries out the reaction succinate + ATP + CoA = succinyl-CoA + ADP + phosphate. The catalysed reaction is GTP + succinate + CoA = succinyl-CoA + GDP + phosphate. It participates in carbohydrate metabolism; tricarboxylic acid cycle; succinate from succinyl-CoA (ligase route): step 1/1. Succinyl-CoA synthetase functions in the citric acid cycle (TCA), coupling the hydrolysis of succinyl-CoA to the synthesis of either ATP or GTP and thus represents the only step of substrate-level phosphorylation in the TCA. The beta subunit provides nucleotide specificity of the enzyme and binds the substrate succinate, while the binding sites for coenzyme A and phosphate are found in the alpha subunit. The polypeptide is Succinate--CoA ligase [ADP-forming] subunit beta (Glaesserella parasuis serovar 5 (strain SH0165) (Haemophilus parasuis)).